Here is a 155-residue protein sequence, read N- to C-terminus: Small ribosomal subunit protein uS7c (155 aa).

Belongs to the universal ribosomal protein uS7 family. Part of the 30S ribosomal subunit.

It localises to the plastid. It is found in the chloroplast. One of the primary rRNA binding proteins, it binds directly to 16S rRNA where it nucleates assembly of the head domain of the 30S subunit. The sequence is that of Small ribosomal subunit protein uS7c (rps7) from Butomus umbellatus (Flowering rush).